Consider the following 405-residue polypeptide: Probable succinyl-diaminopimelate desuccinylase (405 aa).

H72 contributes to the Zn(2+) binding site. Residue D74 is part of the active site. D105 provides a ligand contact to Zn(2+). E139 serves as the catalytic Proton acceptor. 3 residues coordinate Zn(2+): E140, E165, and H377.

Belongs to the peptidase M20A family. Requires Zn(2+) as cofactor. Co(2+) is required as a cofactor.

It carries out the reaction N-succinyl-(2S,6S)-2,6-diaminopimelate + H2O = (2S,6S)-2,6-diaminopimelate + succinate. It participates in amino-acid biosynthesis; L-lysine biosynthesis via DAP pathway; LL-2,6-diaminopimelate from (S)-tetrahydrodipicolinate (succinylase route): step 3/3. The polypeptide is Probable succinyl-diaminopimelate desuccinylase (dapE) (Staphylococcus epidermidis (strain ATCC 12228 / FDA PCI 1200)).